Reading from the N-terminus, the 392-residue chain is ESX-1 secretion-associated protein EspA (392 aa).

Positions 302 to 392 are disordered; that stretch reads TRQALRPRAD…GQKVLVRNVV (91 aa). The span at 334–344 shows a compositional bias: gly residues; it reads QGMGGPVGMGG.

In terms of assembly, homodimer; disulfide-linked. An artificial EsxB-EsxA heterodimer interacts with EspA.

The protein resides in the secreted. Its function is as follows. Required for secretion of EsxA (ESAT-6) and EsxB (CFP-10) and for virulence. Involved in translocation of bacteria from the host (human) phagolysosome to the host cytoplasm. This Mycobacterium tuberculosis (strain ATCC 25618 / H37Rv) protein is ESX-1 secretion-associated protein EspA.